The sequence spans 588 residues: MINKNEQTESTSGAAEQKEDDEEQYVQLSSLGEYKDEVTPLLSPKHVPLVLGKVTKEAAIATHSALHGGMSEEKERQIRDIYDRLDIDNDGTIDIRDLTLALKHETPHIPANLAPVIMSKMSPDDEGRVDFYSFSSYVLENEQKLAEMFADMDRNHDGLVDVVEMKNYCKDIGVPLDDHKAQHIVNKMDQTGSASVDLKEFQEFMMLYPSSDLKDIVDFWRHNLIIDIGEDSQIPEDFSQQEMQEGIWWRHLVAGGAAGAVSRTCTAPFDRIKVYLQVNSSKTNRLGVMSCLKLLHAEGGIKSFWRGNGINVIKIAPESAIKFMCYDQLKRLIQKKKGNEEISTFERLCAGSAAGAISQSTIYPMEVMKTRLALRKTGQLDRGIIHFAHKMYTKEGIRCFYKGYLPNLIGIIPYAGIDLAIYETLKRTYVRYYETNSSEPGVLALLACGTCSSTCGQLSSYPFALVRTRLQALSITRYSPQPDTMFGQFKYILQNEGVTGFYRGITPNFLKVIPAVSISYVVYEKVRTGLGVPVCSRGGLEDIHQFLPCSIHSIIQFFFFPRTFLLTISGRSLRVKPVWRSHFSKFNK.

The segment covering 1-14 (MINKNEQTESTSGA) has biased composition (polar residues). The tract at residues 1–25 (MINKNEQTESTSGAAEQKEDDEEQY) is disordered. EF-hand domains follow at residues 73 to 108 (EKER…ETPH), 109 to 139 (IPAN…SYVL), 140 to 175 (ENEQ…IGVP), and 176 to 211 (LDDH…YPSS). 5 residues coordinate Ca(2+): aspartate 86, aspartate 88, aspartate 90, threonine 92, and aspartate 97. The Ca(2+) site is built by aspartate 153, asparagine 155, aspartate 157, and glutamate 164. Solcar repeat units follow at residues 246-332 (GIWW…LKRL), 342-428 (ISTF…LKRT), and 440-529 (PGVL…VRTG). 6 consecutive transmembrane segments (helical) span residues 252–269 (LVAG…TAPF), 307–326 (GNGI…FMCY), 352–365 (SAAG…IYPM), 403–422 (GYLP…LAIY), 446–463 (LACG…SYPF), and 504–523 (GITP…YVVY).

Belongs to the mitochondrial carrier (TC 2.A.29) family. In terms of assembly, homodimer (via N-terminus).

It is found in the mitochondrion inner membrane. Functionally, mitochondrial and calcium-binding carrier that catalyzes the calcium-dependent exchange of cytoplasmic glutamate with mitochondrial aspartate across the mitochondrial inner membrane. The sequence is that of Putative calcium-binding mitochondrial carrier F55A11.4 from Caenorhabditis elegans.